We begin with the raw amino-acid sequence, 447 residues long: Rab GDP dissociation inhibitor alpha (447 aa).

The residue at position 427 (Ser-427) is a Phosphoserine.

This sequence belongs to the Rab GDI family. In terms of assembly, interacts with RHOH. Interacts with the non-phosphorylated forms of RAB1A, RAB3A, RAB5A, RAB5B, RAB5C, RAB8A, RAB8B, RAB10, RAB12, RAB35, and RAB43. Interacts with RAB3A.

Its subcellular location is the cytoplasm. The protein resides in the golgi apparatus. The protein localises to the trans-Golgi network. Functionally, regulates the GDP/GTP exchange reaction of most Rab proteins by inhibiting the dissociation of GDP from them, and the subsequent binding of GTP to them. Promotes the dissociation of GDP-bound Rab proteins from the membrane and inhibits their activation. Promotes the dissociation of RAB1A, RAB3A, RAB5A and RAB10 from membranes. The sequence is that of Rab GDP dissociation inhibitor alpha (GDI1) from Bos taurus (Bovine).